A 120-amino-acid chain; its full sequence is Transcription elongation factor SPT4 (120 aa).

An interaction with spt-5 region spans residues 1–39; it reads MSASVPADLRNLRACLLCSLVKSVESFQKEGCENCEDVL. The C4-type zinc finger occupies 15-35; sequence CLLCSLVKSVESFQKEGCENC.

Belongs to the SPT4 family. As to quaternary structure, interacts with spt-5 to form DSIF. DSIF interacts with RNA polymerase II and with the positive transcription elongation factor b complex (P-TEFb complex), which is composed of cdk-9 and cyclin-T (cit-1.1 or cit-1.2).

Its subcellular location is the nucleus. May function as a component of the DRB sensitivity-inducing factor complex (DSIF complex), which regulates transcription elongation by RNA polymerase II. DSIF may enhance transcriptional pausing at sites proximal to the promoter, which may in turn facilitate the assembly of an elongation competent RNA polymerase II complex. The chain is Transcription elongation factor SPT4 (spt-4) from Caenorhabditis elegans.